Reading from the N-terminus, the 303-residue chain is Tyrosine recombinase XerC (303 aa).

The Core-binding (CB) domain occupies 3-89 (IQNDQWVSAF…TLRSFYQFLV (87 aa)). Positions 110–297 (KLPSFLYEEE…TKDRLRDVYR (188 aa)) constitute a Tyr recombinase domain. Residues Arg150, Lys174, His249, Arg252, and His275 contribute to the active site. Tyr284 functions as the O-(3'-phospho-DNA)-tyrosine intermediate in the catalytic mechanism.

Belongs to the 'phage' integrase family. XerC subfamily. As to quaternary structure, forms a cyclic heterotetrameric complex composed of two molecules of XerC and two molecules of XerD.

It localises to the cytoplasm. Site-specific tyrosine recombinase, which acts by catalyzing the cutting and rejoining of the recombining DNA molecules. The XerC-XerD complex is essential to convert dimers of the bacterial chromosome into monomers to permit their segregation at cell division. It also contributes to the segregational stability of plasmids. This is Tyrosine recombinase XerC from Halalkalibacterium halodurans (strain ATCC BAA-125 / DSM 18197 / FERM 7344 / JCM 9153 / C-125) (Bacillus halodurans).